A 764-amino-acid polypeptide reads, in one-letter code: Plasma membrane fusion protein prm-1 (764 aa).

Residues 1–61 (MVYNEKNGGG…YLGLRARLSQ (61 aa)) lie on the Extracellular side of the membrane. A helical transmembrane segment spans residues 62–82 (LWFNRWTILLILVLIRVIILT). Over 83–149 (ANLKENLGDA…LKMILTGVQA (67 aa)) the chain is Cytoplasmic. The helical transmembrane segment at 150 to 170 (IIMFVINMYIGTFACLVAAFI) threads the bilayer. The Extracellular portion of the chain corresponds to 171–334 (HGGLHVATAV…SLITLVYKAK (164 aa)). Asn271 and Asn315 each carry an N-linked (GlcNAc...) asparagine glycan. A helical membrane pass occupies residues 335 to 355 (IAFLVVIIILALLAIFVMGYI). Over 356–424 (EYRGFKRERE…AFAYATSLPA (69 aa)) the chain is Cytoplasmic. A helical membrane pass occupies residues 425-445 (LFVLSLAVAGMLSCLFQWVLL). The Extracellular portion of the chain corresponds to 446 to 624 (RQIEKKAPEL…NGVIQEALIT (179 aa)). N-linked (GlcNAc...) asparagine glycosylation is found at Asn479, Asn508, and Asn527. A helical membrane pass occupies residues 625-645 (LGLFLTYVIVVLIGVMGALIG). Topologically, residues 646-764 (WATPGKTRGE…EKVPGYFTPI (119 aa)) are cytoplasmic. Disordered regions lie at residues 653–701 (RGEG…GGGG) and 735–754 (HQRT…PHGD).

Belongs to the PRM1 family.

The protein resides in the cell membrane. Its function is as follows. Involved in cell fusion during mating by stabilizing the plasma membrane fusion event. The chain is Plasma membrane fusion protein prm-1 (prm-1) from Neurospora crassa (strain ATCC 24698 / 74-OR23-1A / CBS 708.71 / DSM 1257 / FGSC 987).